A 517-amino-acid chain; its full sequence is Cytochrome P450 monooxygenase TRI4 (517 aa).

Residues 15–37 traverse the membrane as a helical segment; that stretch reads AVGAAVAVGALYFFCQCFYNLYL. A glycan (N-linked (GlcNAc...) asparagine) is linked at asparagine 444. Cysteine 452 is a heme binding site.

Belongs to the cytochrome P450 family. Requires heme as cofactor.

It localises to the membrane. The protein operates within sesquiterpene biosynthesis; trichothecene biosynthesis. Its function is as follows. Cytochrome P450 monooxygenase; part of the gene cluster that mediates the production of the antimicrobial trichothecene harzianum A (HA) that plays a role in Botrytis cinerea antagonistic activity and plant defense priming. The biosynthesis of harzianum A begins with the cyclization of farnesyl diphosphate to trichodiene and is catalyzed by the trichodiene synthase TRI5. Trichodiene undergoes a series of oxygenations catalyzed by the cytochrome P450 monooxygenase TRI4. TRI4 controls the addition of 3 oxygens at C-2, C-11, and the C-12, C-13-epoxide to form the intermediate isotrichodiol. Isotrichodiol then undergoes a non-enzymatic isomerization and cyclization to form 12,13-epoxytrichothec-9-ene (EPT) which is further converted to trichodermol by the cytochrome P450 monooxygenase TRI11 via C-4 hydroxylation. The last step of HA synthesis is esterification of an octatriendioyl moiety to the C-4 oxygen of trichodermol. The octatriendioyl moiety is probably produced by the polyketide synthase TRI17 and the esterification performed by the trichothecene O-acetyltransferase TRI3. This is Cytochrome P450 monooxygenase TRI4 from Trichoderma arundinaceum.